Here is a 230-residue protein sequence, read N- to C-terminus: Thioredoxin domain-containing protein PLP3A (230 aa).

The region spanning 89–173 (VSEGDFLGEV…GVAMDRLVGF (85 aa)) is the Thioredoxin domain. The interval 197–230 (LSKKKKEEDDEDAEYQESIRRSVRSSENLDSDSD) is disordered.

Belongs to the phosducin family. As to quaternary structure, interacts with TUBB2, TUBB3, TUBB4 and TUBB5. Expressed in embryos, shoot meristems, leaf primordia, root meristems, floral meristems and young floral buds.

Its subcellular location is the cytoplasm. The protein resides in the nucleus. Tubulin-binding protein involved in microtubule formation. The chain is Thioredoxin domain-containing protein PLP3A (PLP3A) from Arabidopsis thaliana (Mouse-ear cress).